A 234-amino-acid polypeptide reads, in one-letter code: NAD-dependent protein deacylase (234 aa).

A Deacetylase sirtuin-type domain is found at 1–234 (MKNLVILSGA…IEMASQEMLK (234 aa)). Residue 9-28 (GAGISAESGIKTFRDAGGLW) coordinates NAD(+). Substrate is bound by residues tyrosine 53 and arginine 56. Residue 86–89 (QNVD) participates in NAD(+) binding. Histidine 104 serves as the catalytic Proton acceptor. NAD(+)-binding positions include 169–171 (GTS) and methionine 217.

It belongs to the sirtuin family. Class III subfamily.

The protein resides in the cytoplasm. The enzyme catalyses N(6)-acetyl-L-lysyl-[protein] + NAD(+) + H2O = 2''-O-acetyl-ADP-D-ribose + nicotinamide + L-lysyl-[protein]. It carries out the reaction N(6)-succinyl-L-lysyl-[protein] + NAD(+) + H2O = 2''-O-succinyl-ADP-D-ribose + nicotinamide + L-lysyl-[protein]. Its function is as follows. NAD-dependent lysine deacetylase and desuccinylase that specifically removes acetyl and succinyl groups on target proteins. Modulates the activities of several proteins which are inactive in their acylated form. This Helicobacter pylori (strain J99 / ATCC 700824) (Campylobacter pylori J99) protein is NAD-dependent protein deacylase.